Reading from the N-terminus, the 205-residue chain is N-(5'-phosphoribosyl)anthranilate isomerase (205 aa).

It belongs to the TrpF family.

The catalysed reaction is N-(5-phospho-beta-D-ribosyl)anthranilate = 1-(2-carboxyphenylamino)-1-deoxy-D-ribulose 5-phosphate. The protein operates within amino-acid biosynthesis; L-tryptophan biosynthesis; L-tryptophan from chorismate: step 3/5. In Thermotoga petrophila (strain ATCC BAA-488 / DSM 13995 / JCM 10881 / RKU-1), this protein is N-(5'-phosphoribosyl)anthranilate isomerase.